The sequence spans 386 residues: Branched-chain-amino-acid aminotransferase, cytosolic (386 aa).

Position 1 is an N-acetylmethionine (Met-1). N6-(pyridoxal phosphate)lysine is present on Lys-222.

Belongs to the class-IV pyridoxal-phosphate-dependent aminotransferase family. As to quaternary structure, homodimer. It depends on pyridoxal 5'-phosphate as a cofactor. In terms of tissue distribution, expressed in brain and kidney. Overexpressed in MYC-induced brain tumors, lymphomas, as well as in a teratocarcinoma cell line.

It localises to the cytoplasm. It catalyses the reaction L-leucine + 2-oxoglutarate = 4-methyl-2-oxopentanoate + L-glutamate. The catalysed reaction is L-isoleucine + 2-oxoglutarate = (S)-3-methyl-2-oxopentanoate + L-glutamate. The enzyme catalyses L-valine + 2-oxoglutarate = 3-methyl-2-oxobutanoate + L-glutamate. Its function is as follows. Catalyzes the first reaction in the catabolism of the essential branched chain amino acids leucine, isoleucine, and valine. This is Branched-chain-amino-acid aminotransferase, cytosolic (Bcat1) from Mus musculus (Mouse).